The sequence spans 469 residues: A-type ATP synthase subunit B 3 (469 aa).

This sequence belongs to the ATPase alpha/beta chains family. In terms of assembly, has multiple subunits with at least A(3), B(3), C, D, E, F, H, I and proteolipid K(x).

It is found in the cell membrane. Functionally, component of the A-type ATP synthase that produces ATP from ADP in the presence of a proton gradient across the membrane. The B chain is a regulatory subunit. This Methanospirillum hungatei JF-1 (strain ATCC 27890 / DSM 864 / NBRC 100397 / JF-1) protein is A-type ATP synthase subunit B 3.